Here is a 172-residue protein sequence, read N- to C-terminus: UPF0102 protein AM1_3954 (172 aa).

This sequence belongs to the UPF0102 family.

The polypeptide is UPF0102 protein AM1_3954 (Acaryochloris marina (strain MBIC 11017)).